The following is a 306-amino-acid chain: Agmatinase (306 aa).

Residues His-126, Asp-149, His-151, Asp-153, Asp-230, and Asp-232 each coordinate Mn(2+).

It belongs to the arginase family. Agmatinase subfamily. Mn(2+) is required as a cofactor.

The catalysed reaction is agmatine + H2O = urea + putrescine. It functions in the pathway amine and polyamine biosynthesis; putrescine biosynthesis via agmatine pathway; putrescine from agmatine: step 1/1. Catalyzes the formation of putrescine from agmatine. In Shigella sonnei (strain Ss046), this protein is Agmatinase.